Consider the following 1036-residue polypeptide: Lethal(2) giant larvae protein homolog 1 (1036 aa).

WD repeat units follow at residues 38–71, 78–119, 139–175, 199–233, 239–271, 289–331, 339–373, 395–473, 517–592, and 601–662; these read SALA…FTGL, VTQM…GLSF, VTVV…GQTL, SLQG…EHVF, LESL…GSPP, AINK…ETLV, VIDF…VLDL, TCSA…YKLS, QKVA…RVLI, and TAVA…LRQS. Phosphoserine is present on S662. Positions 670–694 are disordered; sequence RVSGKKRATTASSKLQEANAQLAEQ. The segment covering 678–693 has biased composition (polar residues); it reads TTASSKLQEANAQLAE. WD repeat units lie at residues 722 to 782, 791 to 843, 848 to 901, and 915 to 938; these read VRCL…KEVQ, AIAV…VSAK, LTAH…VHYS, and VFTR…SLSA. T957 carries the phosphothreonine modification. 3 positions are modified to phosphoserine: S964, S982, and S989. Residues 980–1002 form a disordered region; the sequence is PESCEGSPSSAHSKRADTMEPPE.

It belongs to the WD repeat L(2)GL family. In terms of assembly, associated with nonmuscle myosin II heavy chain. Interacts with PRKCI/aPKC, PARD6B/Par-6 and PARD6A. Interacts with STX4A. Interacts with DCAF1. Interacts with RAB10 (GDP-bound form); the interaction is direct and promotes RAB10 association with membranes and activation through competition with the Rab inhibitor GDI1. Phosphorylated by PRKCI. Expressed at high level in the testis and at lower level in ovary, brain, spleen and kidney.

The protein resides in the early endosome membrane. Its subcellular location is the golgi apparatus. The protein localises to the trans-Golgi network membrane. It is found in the golgi apparatus membrane. It localises to the cell projection. The protein resides in the axon. Its subcellular location is the cytoplasm. The protein localises to the cytoskeleton. In terms of biological role, cortical cytoskeleton protein found in a complex involved in maintaining cell polarity and epithelial integrity. Involved in the regulation of mitotic spindle orientation, proliferation, differentiation and tissue organization of neuroepithelial cells. Involved in axonogenesis through RAB10 activation thereby regulating vesicular membrane trafficking toward the axonal plasma membrane. The chain is Lethal(2) giant larvae protein homolog 1 (Llgl1) from Rattus norvegicus (Rat).